The primary structure comprises 315 residues: PDZ domain-containing protein GIPC2 (315 aa).

The span at Met1–Lys12 shows a compositional bias: basic residues. The interval Met1–Ala34 is disordered. The region spanning Glu117–Glu197 is the PDZ domain.

This sequence belongs to the GIPC family. As to quaternary structure, probably interacts with SEMA5A. Expressed at highest levels in ascending colon and at moderate levels in adult kidney. Expressed at low levels in adult pancreas and at very low levels in adult liver. Expression is down-regulated in several primary tumors, such as kidney, colon and rectal tumors.

The protein resides in the cytoplasm. The protein is PDZ domain-containing protein GIPC2 (GIPC2) of Homo sapiens (Human).